We begin with the raw amino-acid sequence, 329 residues long: MTKDLRPIIWDDDKKELILIDQRKLPNKLEYFICKTYEDVAYAIKDMVVRGAPAIGVSAAYGLALAEINGDDIYKAYEVLKNTRPTAVNLFWALDRCLTAYKEGKSILDEAKKIHEEDIETCKKIGMIGEKLIEDGDTILTHCNAGALATSAYGTALSVIRFAFYNGKKIRVIADETRPRLQGAKLTAFELNYEGIPVKVITDNTAGFLMQKGEIDKIIVGADRILADGTVYNKIGTYSLAVLAKYHRIPFYVAAPLSTFDLRSSEEDVIIEERDEKEVAYIDGVRIVPEGVGCYNYAFDKTPPDLITAIITEKGIVKPNRDEILKLFR.

Residues 50 to 52, arginine 84, and glutamine 182 each bind substrate; that span reads RGA. Residue aspartate 223 is the Proton donor of the active site. 233–234 is a substrate binding site; that stretch reads NK.

Belongs to the eIF-2B alpha/beta/delta subunits family. MtnA subfamily.

The enzyme catalyses 5-(methylsulfanyl)-alpha-D-ribose 1-phosphate = 5-(methylsulfanyl)-D-ribulose 1-phosphate. Its function is as follows. Catalyzes the interconversion of methylthioribose-1-phosphate (MTR-1-P) into methylthioribulose-1-phosphate (MTRu-1-P). The polypeptide is Putative methylthioribose-1-phosphate isomerase (Methanocaldococcus jannaschii (strain ATCC 43067 / DSM 2661 / JAL-1 / JCM 10045 / NBRC 100440) (Methanococcus jannaschii)).